The primary structure comprises 187 residues: UPF0340 protein SPG_0604 (187 aa).

This sequence belongs to the UPF0340 family.

The chain is UPF0340 protein SPG_0604 from Streptococcus pneumoniae serotype 19F (strain G54).